A 379-amino-acid chain; its full sequence is Ribosomal RNA large subunit methyltransferase G (379 aa).

The protein belongs to the methyltransferase superfamily. RlmG family.

The protein resides in the cytoplasm. The catalysed reaction is guanosine(1835) in 23S rRNA + S-adenosyl-L-methionine = N(2)-methylguanosine(1835) in 23S rRNA + S-adenosyl-L-homocysteine + H(+). In terms of biological role, specifically methylates the guanine in position 1835 (m2G1835) of 23S rRNA. The chain is Ribosomal RNA large subunit methyltransferase G from Serratia proteamaculans (strain 568).